A 485-amino-acid chain; its full sequence is Phosphoglucosamine mutase (485 aa).

Catalysis depends on Ser133, which acts as the Phosphoserine intermediate. Ser133, Asp274, Asp276, and Asp278 together coordinate Mg(2+). Ser133 carries the phosphoserine modification.

Belongs to the phosphohexose mutase family. It depends on Mg(2+) as a cofactor. Activated by phosphorylation.

The catalysed reaction is alpha-D-glucosamine 1-phosphate = D-glucosamine 6-phosphate. Functionally, catalyzes the conversion of glucosamine-6-phosphate to glucosamine-1-phosphate. This Rippkaea orientalis (strain PCC 8801 / RF-1) (Cyanothece sp. (strain PCC 8801)) protein is Phosphoglucosamine mutase.